Reading from the N-terminus, the 953-residue chain is Glutamate receptor 3.5 (953 aa).

The first 29 residues, 1–29 (MGFFVMIRDVSMGFMLLCISALWVLPIQG), serve as a signal peptide directing secretion. Residues 30–606 (AGRESFSRNS…SPWSFLKPFT (577 aa)) are Extracellular-facing. N-linked (GlcNAc...) asparagine glycans are attached at residues asparagine 38, asparagine 95, asparagine 223, asparagine 371, asparagine 397, asparagine 436, asparagine 454, and asparagine 569. The chain crosses the membrane as a helical span at residues 607–627 (IEMWAVTGALFLFVGAVIWIL). Residues 628–636 (EHRFNEEFR) are Cytoplasmic-facing. Residues 637–657 (GPPRRQIITVFWFSFSTMFFS) form a helical membrane-spanning segment. The Cytoplasmic portion of the chain corresponds to 658–668 (HRENTVSTLGR). The chain crosses the membrane as a helical span at residues 669–689 (FVLLVWLFVVLIINSSYTASL). Residues 690–850 (TSILTVQQLT…TENYQISVQS (161 aa)) are Extracellular-facing. A helical transmembrane segment spans residues 851–871 (FWGLFLICGVVWFIALTLFCW). The Cytoplasmic portion of the chain corresponds to 872-953 (KVFWQYQRLR…SQSKDHETPQ (82 aa)). Residues 928–953 (EKSSKKLKDGQSSAENSQSKDHETPQ) form a disordered region.

The protein belongs to the glutamate-gated ion channel (TC 1.A.10.1) family. May form heteromers. In terms of tissue distribution, expressed predominantly in roots. Also detected in shoots.

It localises to the membrane. In terms of biological role, glutamate-gated receptor that probably acts as a non-selective cation channel. May be involved in light-signal transduction and calcium homeostasis via the regulation of calcium influx into cells. The sequence is that of Glutamate receptor 3.5 (GLR3.5) from Arabidopsis thaliana (Mouse-ear cress).